Reading from the N-terminus, the 617-residue chain is V-type proton ATPase catalytic subunit A (617 aa).

T136 carries the phosphothreonine modification. Residue 250–257 coordinates ATP; it reads GAFGCGKT. At S384 the chain carries Phosphoserine; by AMPK.

This sequence belongs to the ATPase alpha/beta chains family. As to quaternary structure, V-ATPase is a heteromultimeric enzyme made up of two complexes: the ATP-hydrolytic V1 complex and the proton translocation V0 complex. The V1 complex consists of three catalytic AB heterodimers that form a heterohexamer, three peripheral stalks each consisting of EG heterodimers, one central rotor including subunits D and F, and the regulatory subunits C and H. The proton translocation complex V0 consists of the proton transport subunit a, a ring of proteolipid subunits c9c'', rotary subunit d, subunits e and f, and the accessory subunits ATP6AP1/Ac45 and ATP6AP2/PRR. Interacts with the V0 complex V-ATPase subunit a4 ATP6V0A4. Interacts with WFS1. Interacts with alpha-crystallin B chain/CRYAB and with MTOR, forming a ternary complex. Phosphorylation at Ser-384 by AMPK down-regulates its enzyme activity.

It is found in the cytoplasm. Its subcellular location is the cytosol. The protein localises to the cytoplasmic vesicle. The protein resides in the secretory vesicle. It localises to the clathrin-coated vesicle membrane. It is found in the lysosome. It carries out the reaction ATP + H2O + 4 H(+)(in) = ADP + phosphate + 5 H(+)(out). Its activity is regulated as follows. ATP hydrolysis occurs at the interface between the nucleotide-binding domains of subunits A and B. ATP hydrolysis triggers a conformational change in the subunits D and F, which induces a shift of subunit d. The c-ring is subsequently rotated and results in a continuous proton translocation across the membrane. Functionally, catalytic subunit of the V1 complex of vacuolar(H+)-ATPase (V-ATPase), a multisubunit enzyme composed of a peripheral complex (V1) that hydrolyzes ATP and a membrane integral complex (V0) that translocates protons. V-ATPase is responsible for acidifying and maintaining the pH of intracellular compartments and in some cell types, is targeted to the plasma membrane, where it is responsible for acidifying the extracellular environment. In aerobic conditions, involved in intracellular iron homeostasis, thus triggering the activity of Fe(2+) prolyl hydroxylase (PHD) enzymes, and leading to HIF1A hydroxylation and subsequent proteasomal degradation. May play a role in neurite development and synaptic connectivity. The polypeptide is V-type proton ATPase catalytic subunit A (ATP6V1A) (Sus scrofa (Pig)).